Consider the following 317-residue polypeptide: MYNYLDFEKPVADLEGQILELKKLAQEQGSVEMGDEISRLEKRSADALKDIYRKLTPWQKAQIARHPDRPHCLEYIDRLFTEFTPLAGDRKFANDEALQAGFGRFNGTPVAIIGQEKGSDTKTRLKHNFGSARPEGYRKAVRIMEMADRFQLPLITFVDTAGAYPGVSAEERGQAEAIARSTAECLKLRVPVISIIIGEGGSGGAIAIAVANRVYMLEHSIYSVISPEGAASILWHDSTRAKDAASNMRITAQDLFDLKIIDGIIPEPLGGAHRGKESVIDATGDIIAASLRSMKDIDGETLKQERRQKFLEIGRNI.

The region spanning 40–293 is the CoA carboxyltransferase C-terminal domain; it reads LEKRSADALK…GDIIAASLRS (254 aa).

It belongs to the AccA family. In terms of assembly, acetyl-CoA carboxylase is a heterohexamer composed of biotin carboxyl carrier protein (AccB), biotin carboxylase (AccC) and two subunits each of ACCase subunit alpha (AccA) and ACCase subunit beta (AccD).

It localises to the cytoplasm. It catalyses the reaction N(6)-carboxybiotinyl-L-lysyl-[protein] + acetyl-CoA = N(6)-biotinyl-L-lysyl-[protein] + malonyl-CoA. The protein operates within lipid metabolism; malonyl-CoA biosynthesis; malonyl-CoA from acetyl-CoA: step 1/1. Component of the acetyl coenzyme A carboxylase (ACC) complex. First, biotin carboxylase catalyzes the carboxylation of biotin on its carrier protein (BCCP) and then the CO(2) group is transferred by the carboxyltransferase to acetyl-CoA to form malonyl-CoA. This is Acetyl-coenzyme A carboxylase carboxyl transferase subunit alpha from Brucella melitensis biotype 2 (strain ATCC 23457).